A 455-amino-acid chain; its full sequence is Bifunctional protein GlmU (455 aa).

A pyrophosphorylase region spans residues 1–228 (MNNTLTTIIL…EFEIEGVNNR (228 aa)). UDP-N-acetyl-alpha-D-glucosamine-binding positions include 10–13 (LAAG), Lys-24, Gln-75, 80–81 (GT), 102–104 (YGD), Gly-138, Glu-153, Asn-168, and Asn-226. Residue Asp-104 coordinates Mg(2+). A Mg(2+)-binding site is contributed by Asn-226. The segment at 229-249 (QQLAQLERKWQAKLVEDLQVQ) is linker. Positions 250 to 455 (GVQFADPNRV…DNYQRPEKKK (206 aa)) are N-acetyltransferase. 2 residues coordinate UDP-N-acetyl-alpha-D-glucosamine: Arg-332 and Lys-350. His-362 functions as the Proton acceptor in the catalytic mechanism. Residues Tyr-365 and Asn-376 each contribute to the UDP-N-acetyl-alpha-D-glucosamine site. Acetyl-CoA-binding positions include Ala-379, 385–386 (NY), Ala-422, and Arg-439.

In the N-terminal section; belongs to the N-acetylglucosamine-1-phosphate uridyltransferase family. It in the C-terminal section; belongs to the transferase hexapeptide repeat family. Homotrimer. Requires Mg(2+) as cofactor.

The protein resides in the cytoplasm. The catalysed reaction is alpha-D-glucosamine 1-phosphate + acetyl-CoA = N-acetyl-alpha-D-glucosamine 1-phosphate + CoA + H(+). The enzyme catalyses N-acetyl-alpha-D-glucosamine 1-phosphate + UTP + H(+) = UDP-N-acetyl-alpha-D-glucosamine + diphosphate. It participates in nucleotide-sugar biosynthesis; UDP-N-acetyl-alpha-D-glucosamine biosynthesis; N-acetyl-alpha-D-glucosamine 1-phosphate from alpha-D-glucosamine 6-phosphate (route II): step 2/2. Its pathway is nucleotide-sugar biosynthesis; UDP-N-acetyl-alpha-D-glucosamine biosynthesis; UDP-N-acetyl-alpha-D-glucosamine from N-acetyl-alpha-D-glucosamine 1-phosphate: step 1/1. The protein operates within bacterial outer membrane biogenesis; LPS lipid A biosynthesis. Catalyzes the last two sequential reactions in the de novo biosynthetic pathway for UDP-N-acetylglucosamine (UDP-GlcNAc). The C-terminal domain catalyzes the transfer of acetyl group from acetyl coenzyme A to glucosamine-1-phosphate (GlcN-1-P) to produce N-acetylglucosamine-1-phosphate (GlcNAc-1-P), which is converted into UDP-GlcNAc by the transfer of uridine 5-monophosphate (from uridine 5-triphosphate), a reaction catalyzed by the N-terminal domain. The sequence is that of Bifunctional protein GlmU from Psychrobacter sp. (strain PRwf-1).